A 127-amino-acid chain; its full sequence is MSYKPIAPAPSSTPGSSTPGPGTPVPTAGSVPSPSGSVPGAAGPFRPLFNDFGPPSMGYVQAMKPPGAQGSQSTYTDLLSVIEEMGKEIRPTYAGSKSAMERLKRGIIHARALVRECLAETERNART.

A disordered region spans residues 1 to 49 (MSYKPIAPAPSSTPGSSTPGPGTPVPTAGSVPSPSGSVPGAAGPFRPLF). The span at 9–44 (APSSTPGSSTPGPGTPVPTAGSVPSPSGSVPGAAGP) shows a compositional bias: low complexity. The segment at 65–107 (PPGAQGSQSTYTDLLSVIEEMGKEIRPTYAGSKSAMERLKRGI) is interaction with CDK2.

This sequence belongs to the CDK2AP family. As to quaternary structure, component of the nucleosome remodeling and deacetylase (NuRD) repressor complex, composed of core proteins MTA1, MTA2, MTA3, RBBP4, RBBP7, HDAC1, HDAC2, MBD2, MBD3, and peripherally associated proteins CDK2AP1, CDK2AP2, GATAD2A, GATAD2B, CHD3, CHD4 and CHD5. The exact stoichiometry of the NuRD complex is unknown, and some subunits such as MBD2 and MBD3, GATAD2A and GATAD2B, and CHD3, CHD4 and CHD5 define mutually exclusive NuRD complexes. Interacts with CDK2AP1. Interacts with CDK2. Interacts with MAPK1. Post-translationally, phosphorylated by MAPK1 and CDK2.

The protein resides in the cytoplasm. It localises to the nucleus. In terms of biological role, acts as a component of the histone deacetylase NuRD complex which participates in the remodeling of chromatin. Inhibits cell cycle G1/S phase transition by repressing CDK2 expression and activation; represses CDK2 activation by inhibiting its interaction with cyclin E and A. Plays a role in regulating the self-renewal of embryonic stem cells (ESCs) and in maintaining cell survival during terminal differentiation of ESCs. Regulates microtubule organization of metaphase II oocytes. The polypeptide is Cyclin-dependent kinase 2-associated protein 2 (CDK2AP2) (Bos taurus (Bovine)).